A 406-amino-acid chain; its full sequence is 2,3-bisphosphoglycerate-independent phosphoglycerate mutase (406 aa).

Belongs to the BPG-independent phosphoglycerate mutase family. A-PGAM subfamily.

The enzyme catalyses (2R)-2-phosphoglycerate = (2R)-3-phosphoglycerate. It functions in the pathway carbohydrate degradation; glycolysis; pyruvate from D-glyceraldehyde 3-phosphate: step 3/5. Functionally, catalyzes the interconversion of 2-phosphoglycerate and 3-phosphoglycerate. The chain is 2,3-bisphosphoglycerate-independent phosphoglycerate mutase from Methanococcus maripaludis (strain C5 / ATCC BAA-1333).